We begin with the raw amino-acid sequence, 203 residues long: MEDSRLLITLILVFGVIFLKKFFQSNQHPSAQRLSATGVNAHGRPQGSTQNALRRTGRVNGGHPVTTQMVETVQNLAPNLHPEQIRYSLENTGSVEETVERYLRGDEFSFPPGFEPSRAPMGANAAVDNNAAGGGEFNDPRKKNMICAENLLDKFHVDLNEDMSNLSFKDLDIEERKRLLVWQARKNLETKLQSDKDLQSLLT.

Over 1-6 (MEDSRL) the chain is Lumenal. A helical membrane pass occupies residues 7-23 (LITLILVFGVIFLKKFF). Topologically, residues 24 to 203 (QSNQHPSAQR…SDKDLQSLLT (180 aa)) are cytoplasmic. Positions 36–61 (ATGVNAHGRPQGSTQNALRRTGRVNG) are disordered. Residues 65–107 (VTTQMVETVQNLAPNLHPEQIRYSLENTGSVEETVERYLRGDE) form the CUE domain.

Belongs to the CUE1 family. In terms of assembly, forms a heterodimer with UBC7. Interacts with SSM4/DOA10 and UBX2/SEL1.

The protein localises to the endoplasmic reticulum membrane. Functionally, component of the endoplasmic reticulum-associated protein degradation (ERAD) pathway. Recruits the soluble ubiquitin-conjugating enzyme UBC7 to the cytoplasmic face of the endoplasmic reticulum membrane where it functions in degradation of misfolded or regulated proteins localized in the endoplasmic reticulum (ER) lumen or membrane via the ubiquitin-proteasome system. Targets the E2 conjugating enzyme UBC7 to the DOA10 ubiquitin ligase complex, which is part of the ERAD-C pathway responsible for the rapid degradation of membrane proteins with misfolded cytoplasmic domains, and to the HRD1 ubiquitin ligase complex, which is part of the ERAD-L and ERAD-M pathways responsible for the rapid degradation of soluble lumenal and membrane proteins with misfolded lumenal domains (ERAD-L), or ER-membrane proteins with misfolded transmembrane domains (ERAD-M). Also has a role in cold adaptation, perhaps through effects on sterol biosynthesis. The sequence is that of Coupling of ubiquitin conjugation to ER degradation protein 1 (CUE1) from Saccharomyces cerevisiae (strain ATCC 204508 / S288c) (Baker's yeast).